Here is a 388-residue protein sequence, read N- to C-terminus: D-alanyl-D-alanine carboxypeptidase DacD (388 aa).

Residues 1-21 (MKRRLIIAASLFVFNLSSGFA) form the signal peptide. Catalysis depends on Ser-63, which acts as the Acyl-ester intermediate. The active-site Proton acceptor is Lys-66. Ser-129 is an active-site residue. A substrate-binding site is contributed by Lys-232.

This sequence belongs to the peptidase S11 family.

The protein localises to the cell inner membrane. The catalysed reaction is Preferential cleavage: (Ac)2-L-Lys-D-Ala-|-D-Ala. Also transpeptidation of peptidyl-alanyl moieties that are N-acyl substituents of D-alanine.. Its pathway is cell wall biogenesis; peptidoglycan biosynthesis. Its function is as follows. Removes C-terminal D-alanyl residues from sugar-peptide cell wall precursors. This chain is D-alanyl-D-alanine carboxypeptidase DacD (dacD), found in Escherichia coli (strain K12).